The sequence spans 322 residues: MEIIKITPRGYCYGVVDAMVIARNASLDKTLPRPIYILGMIVHNKHVTDAFESDGIITLDGPNRLEILEQIETGTVIFTAHGVSPEVKRRAKEKGLVCIDATCPDVENTHTLIRRKKADGYHVIYIGKKGHPEPEGAVGVAPDIVHLVENKQDIEQLPESLNDQKLIVTNQTTMSQWDVKHLMEDLEEKFPHIEVHKEICLATQVRQEAVANQAPSADVLIVVGDPKSNNSNRLAQVSKEIAHTEAYRISDISELKLEWLEGKSTIAVTAGASTPTPIVKEVIDYIKGYDPLNITPIPETSGVPVDKILPKIKNAAPVKILD.

Cys12 contacts [4Fe-4S] cluster. The (2E)-4-hydroxy-3-methylbut-2-enyl diphosphate site is built by His43 and His81. 2 residues coordinate dimethylallyl diphosphate: His43 and His81. Residues His43 and His81 each coordinate isopentenyl diphosphate. Cys103 serves as a coordination point for [4Fe-4S] cluster. His131 serves as a coordination point for (2E)-4-hydroxy-3-methylbut-2-enyl diphosphate. A dimethylallyl diphosphate-binding site is contributed by His131. His131 is a binding site for isopentenyl diphosphate. Glu133 (proton donor) is an active-site residue. Thr172 contributes to the (2E)-4-hydroxy-3-methylbut-2-enyl diphosphate binding site. Cys200 contributes to the [4Fe-4S] cluster binding site. The (2E)-4-hydroxy-3-methylbut-2-enyl diphosphate site is built by Ser228, Asn230, and Ser273. Residues Ser228, Asn230, and Ser273 each coordinate dimethylallyl diphosphate. Residues Ser228, Asn230, and Ser273 each coordinate isopentenyl diphosphate.

Belongs to the IspH family. [4Fe-4S] cluster is required as a cofactor.

It catalyses the reaction isopentenyl diphosphate + 2 oxidized [2Fe-2S]-[ferredoxin] + H2O = (2E)-4-hydroxy-3-methylbut-2-enyl diphosphate + 2 reduced [2Fe-2S]-[ferredoxin] + 2 H(+). It carries out the reaction dimethylallyl diphosphate + 2 oxidized [2Fe-2S]-[ferredoxin] + H2O = (2E)-4-hydroxy-3-methylbut-2-enyl diphosphate + 2 reduced [2Fe-2S]-[ferredoxin] + 2 H(+). It participates in isoprenoid biosynthesis; dimethylallyl diphosphate biosynthesis; dimethylallyl diphosphate from (2E)-4-hydroxy-3-methylbutenyl diphosphate: step 1/1. Its pathway is isoprenoid biosynthesis; isopentenyl diphosphate biosynthesis via DXP pathway; isopentenyl diphosphate from 1-deoxy-D-xylulose 5-phosphate: step 6/6. In terms of biological role, catalyzes the conversion of 1-hydroxy-2-methyl-2-(E)-butenyl 4-diphosphate (HMBPP) into a mixture of isopentenyl diphosphate (IPP) and dimethylallyl diphosphate (DMAPP). Acts in the terminal step of the DOXP/MEP pathway for isoprenoid precursor biosynthesis. The polypeptide is 4-hydroxy-3-methylbut-2-enyl diphosphate reductase (Macrococcus caseolyticus (strain JCSC5402) (Macrococcoides caseolyticum)).